A 276-amino-acid chain; its full sequence is MAIKTYKPYTPSRRFMSVLDSKDITAKSSVKGLLTKLKATAGRNNNGRITSRHKERGAKKLYRIIDFKRNKYNIEGKVAAIEYDPYRNARIALVVYPDGDKRYILQPSGLKVGDSVIAAEGGLDIKVGFAMKLKNIPIGTVVHNIEMHPGAGGQLARSAGMSAQIMGRENKYTILRMPSSEMRYILSECMASVGVVGNEDFINVSIGKAGRNRHRGIRPQTRGSAMNPVDHPHGGGEGKTGTSGHPVSPWGTPAKGYKTRKKKASDKLIISRKKHK.

A disordered region spans residues 212 to 276 (NRHRGIRPQT…KLIISRKKHK (65 aa)). Residues 257 to 276 (YKTRKKKASDKLIISRKKHK) are compositionally biased toward basic residues.

Belongs to the universal ribosomal protein uL2 family. In terms of assembly, part of the 50S ribosomal subunit. Forms a bridge to the 30S subunit in the 70S ribosome.

In terms of biological role, one of the primary rRNA binding proteins. Required for association of the 30S and 50S subunits to form the 70S ribosome, for tRNA binding and peptide bond formation. It has been suggested to have peptidyltransferase activity; this is somewhat controversial. Makes several contacts with the 16S rRNA in the 70S ribosome. The protein is Large ribosomal subunit protein uL2 of Helicobacter pylori (strain P12).